A 107-amino-acid polypeptide reads, in one-letter code: MRDNNNNNEKYLIDFLKKVGSMRGSYSGSQIVIFASKDKKDEKIEKKRKIKNLKDKIRSQKRTIELEVENRRLRDRIDGLKSGINELTANLENLKKKSDNQKKDMSY.

Residues 34–107 (FASKDKKDEK…SDNQKKDMSY (74 aa)) adopt a coiled-coil conformation.

This is an uncharacterized protein from Dictyostelium discoideum (Social amoeba).